A 912-amino-acid polypeptide reads, in one-letter code: MGRDARRLPLLPFLLLLLAAAAGVAESATDAEAIHDLARSVPALGWDGDNVCGFEGVTCERGGAGKVTELNLADRGLSGTLPDSLSSLTSLTALQLQGNALTGAVPSLARMGSLARLALDGNAFTSLPPDFLHGLTSLQYLTMENLPLPPWPVPDAIANCSSLDTFSASNASISGPFPAVLATLVSLRNLRLSYNNLTGGLPPELSSLIAMESLQLNNQRSDDKLSGPIDVIASMKSLKLLWIQSNKFTGPIPDLNGTQLEAFNVRDNMLTGVVPPSLTGLMSLKNVSLSNNNFQGPKPAFAAIPGQDEDSGNGFCLNTPGPCSPLTTTLLQVAEGFGYPYELAKTWKGNDPCSPAWVGIVCTSSDVSMINLSRKNLSGRISPALANLTRLARLDLSNNNLTGVIPDVLTTLPSLTVLNVANNRLTGEVPKFKPSVNVLAQGNLFGQSSGSSGGGGGSDGDSSSSDSAGGGKSKPNTGMIIGIIVAVIILFACIALLVHHRKKKNVEKFRPVSTKTSPAESEMMKIQVVGANGISNGSSAFPTELYSHVSAANSSNISELFESHGMQLSVEVLLKATNNFSEDCILGRGGFGVVFKGNLNGKLVAVKRCDSGTMGTKGQEEFLAEIDVLRKVRHRHLVALLGYCTHGNERLLVYEYMSGGTLREHLCDLQQSGFIPLTWTQRMTIALDVARGIEYLHGLAQETFIHRDLKPSNILLDQDLRAKVSDFGLVKLAKDTDKSLMTRIAGTFGYLAPEYATTGKVTTKVDVYAYGVILMEMITGRKVLDDSLPDDETHLVTIFRRNILDKEKFRKFVDPTLELSAEGWTSLLEVADLARHCTAREPYQRPDMCHCVNRLSSLVDQWKPTNIDEDDYEGETSEMGLHQQLEKWRCDDFTISDSDTFGSFNVPRKYNG.

The N-terminal stretch at Met-1–Ser-27 is a signal peptide. Over Ala-28–Thr-477 the chain is Extracellular. 3 LRR repeats span residues Ala-64–Leu-88, Thr-89–Met-111, and Gly-112–Gly-134. Asn-159, Asn-170, Asn-196, Asn-256, Asn-286, Asn-371, Asn-376, Asn-387, and Asn-400 each carry an N-linked (GlcNAc...) asparagine glycan. 6 LRR repeats span residues Leu-184–Leu-208, Met-235–Glu-261, Leu-281–Ala-303, Ser-364–Leu-388, Thr-389–Thr-411, and Pro-413–Val-438. Residues Ser-448 to Lys-472 are disordered. Residues Gly-478–Val-498 form a helical membrane-spanning segment. Residues His-499–Gly-912 lie on the Cytoplasmic side of the membrane. The 280-residue stretch at Phe-580–Val-859 folds into the Protein kinase domain. ATP contacts are provided by residues Leu-586–Val-594 and Lys-607. Asp-708 (proton acceptor) is an active-site residue.

The protein belongs to the protein kinase superfamily. Ser/Thr protein kinase family. Mn(2+) serves as cofactor. In terms of tissue distribution, expressed in young and mature leaves.

The protein resides in the cell membrane. It catalyses the reaction L-seryl-[protein] + ATP = O-phospho-L-seryl-[protein] + ADP + H(+). The catalysed reaction is L-threonyl-[protein] + ATP = O-phospho-L-threonyl-[protein] + ADP + H(+). Transmembrane kinase receptor involved in the regulation of reactive oxygen species (ROS) homeostasis, chloroplast development and leaf senescence. The protein is Receptor protein kinase WSS1 of Oryza sativa subsp. japonica (Rice).